Here is a 503-residue protein sequence, read N- to C-terminus: Cytochrome P450 7A1 (503 aa).

The chain crosses the membrane as a helical span at residues 4-24; sequence ISLIWGIAVLVSCCIWFIVGI. Residue Cys444 coordinates heme.

Belongs to the cytochrome P450 family. It depends on heme as a cofactor. In terms of tissue distribution, detected in liver (at protein level). Liver.

Its subcellular location is the endoplasmic reticulum membrane. The protein resides in the microsome membrane. It carries out the reaction cholesterol + reduced [NADPH--hemoprotein reductase] + O2 = 7alpha-hydroxycholesterol + oxidized [NADPH--hemoprotein reductase] + H2O + H(+). The enzyme catalyses 4beta-hydroxycholesterol + reduced [NADPH--hemoprotein reductase] + O2 = 4beta,7alpha-dihydroxycholesterol + oxidized [NADPH--hemoprotein reductase] + H2O + H(+). The catalysed reaction is lathosterol + reduced [NADPH--hemoprotein reductase] + O2 = 7alpha,8alpha-epoxy-5alpha-cholestan-3beta-ol + oxidized [NADPH--hemoprotein reductase] + H2O + H(+). It catalyses the reaction lathosterol + reduced [NADPH--hemoprotein reductase] + O2 = 5alpha-cholestan-7-oxo-3beta-ol + oxidized [NADPH--hemoprotein reductase] + H2O + H(+). It carries out the reaction 7-dehydrocholesterol + reduced [NADPH--hemoprotein reductase] + O2 = 7-oxocholesterol + oxidized [NADPH--hemoprotein reductase] + H2O + H(+). The enzyme catalyses (24S)-hydroxycholesterol + reduced [NADPH--hemoprotein reductase] + O2 = (24S)-7alpha-dihydroxycholesterol + oxidized [NADPH--hemoprotein reductase] + H2O + H(+). The catalysed reaction is (24R)-hydroxycholesterol + reduced [NADPH--hemoprotein reductase] + O2 = (24R)-7alpha-dihydroxycholesterol + oxidized [NADPH--hemoprotein reductase] + H2O + H(+). The protein operates within lipid metabolism; bile acid biosynthesis. It functions in the pathway steroid metabolism; cholesterol degradation. In terms of biological role, a cytochrome P450 monooxygenase involved in the metabolism of endogenous cholesterol and its oxygenated derivatives (oxysterols). Mechanistically, uses molecular oxygen inserting one oxygen atom into a substrate, and reducing the second into a water molecule, with two electrons provided by NADPH via cytochrome P450 reductase (CPR; NADPH-ferrihemoprotein reductase). Functions as a critical regulatory enzyme of bile acid biosynthesis and cholesterol homeostasis. Catalyzes the hydroxylation of carbon hydrogen bond at 7-alpha position of cholesterol, a rate-limiting step in cholesterol catabolism and bile acid biosynthesis. 7-alpha hydroxylates several oxysterols, including 4beta-hydroxycholesterol and 24-hydroxycholesterol. Catalyzes the oxidation of the 7,8 double bond of 7-dehydrocholesterol and lathosterol with direct and predominant formation of the 7-keto derivatives. The polypeptide is Cytochrome P450 7A1 (Cyp7a1) (Rattus norvegicus (Rat)).